A 112-amino-acid chain; its full sequence is Divalent-cation tolerance protein CutA (112 aa).

Positions 16, 83, and 84 each coordinate Cu cation.

This sequence belongs to the CutA family. In terms of assembly, homotrimer. Requires Cu cation as cofactor.

The protein localises to the cytoplasm. Functionally, involved in resistance toward heavy metals. The sequence is that of Divalent-cation tolerance protein CutA from Shigella boydii serotype 18 (strain CDC 3083-94 / BS512).